We begin with the raw amino-acid sequence, 154 residues long: Ribonuclease H (154 aa).

Positions 5-147 (GKSRVAIYTD…ADMLARGEVE (143 aa)) constitute an RNase H type-1 domain. The Mg(2+) site is built by Asp-14, Glu-53, Asp-75, and Asp-139.

This sequence belongs to the RNase H family. As to quaternary structure, monomer. Mg(2+) serves as cofactor.

Its subcellular location is the cytoplasm. It carries out the reaction Endonucleolytic cleavage to 5'-phosphomonoester.. Endonuclease that specifically degrades the RNA of RNA-DNA hybrids. In Anaplasma marginale (strain St. Maries), this protein is Ribonuclease H.